Reading from the N-terminus, the 334-residue chain is D-alanine--D-alanine ligase (334 aa).

Positions 114–314 (KRIWRFEGLP…YEELCLRILA (201 aa)) constitute an ATP-grasp domain. 140 to 195 (LEDLGSPMIVKPSREGSTIGLTKVTSPGQCEQAYRLASRYDPEVLCEQFIEGEETT) contacts ATP. Residues D267, E281, and N283 each contribute to the Mg(2+) site.

This sequence belongs to the D-alanine--D-alanine ligase family. Mg(2+) serves as cofactor. The cofactor is Mn(2+).

The protein localises to the cytoplasm. The enzyme catalyses 2 D-alanine + ATP = D-alanyl-D-alanine + ADP + phosphate + H(+). It participates in cell wall biogenesis; peptidoglycan biosynthesis. Cell wall formation. The protein is D-alanine--D-alanine ligase of Paracidovorax citrulli (strain AAC00-1) (Acidovorax citrulli).